The sequence spans 293 residues: Small ribosomal subunit protein uS2 (293 aa).

A disordered region spans residues 265-293 (DGGDWAASSAPAPGGENWAEAQPAEGAKW).

It belongs to the universal ribosomal protein uS2 family. Component of the small ribosomal subunit. Mature ribosomes consist of a small (40S) and a large (60S) subunit. The 40S subunit contains about 33 different proteins and 1 molecule of RNA (18S). The 60S subunit contains about 49 different proteins and 3 molecules of RNA (25S, 5.8S and 5S). Interacts with rps21.

The protein localises to the cytoplasm. Its function is as follows. Required for the assembly and/or stability of the 40S ribosomal subunit. Required for the processing of the 20S rRNA-precursor to mature 18S rRNA in a late step of the maturation of 40S ribosomal subunits. The polypeptide is Small ribosomal subunit protein uS2 (rps0) (Emericella nidulans (strain FGSC A4 / ATCC 38163 / CBS 112.46 / NRRL 194 / M139) (Aspergillus nidulans)).